The sequence spans 298 residues: MMPIPANPTNASIQPQSLYDAWADLAWRAMLTEVNLSPKPGLVDRLNCGAHKDMALADFHRSAEAIRHWLPRFMEYGASCTRLPPESVLAGLRPLGMACEAAMFRATAGVNTHKGSIFSLGLLCAAIGRLYQLRQPITAETLCATAADFCRGLTTRELRQNNLQLTAGQRLYQQLGLTGARGEAEAGYPLVIRHALPHYRALLAQGRDPELALLDTLLLLMSLNGDTNVASRGGADGLRWLQQQAAVLLHQGGIRTPDDLVYLHRFDQQCIERNLSPGGSADLLIVTWFLAQISQVNH.

This sequence belongs to the CitG/MdcB family.

It carries out the reaction 3'-dephospho-CoA + ATP = 2'-(5''-triphospho-alpha-D-ribosyl)-3'-dephospho-CoA + adenine. The sequence is that of Probable 2-(5''-triphosphoribosyl)-3'-dephosphocoenzyme-A synthase 2 from Salmonella choleraesuis (strain SC-B67).